We begin with the raw amino-acid sequence, 293 residues long: Pyridoxal 5'-phosphate synthase subunit PdxS (293 aa).

Aspartate 23 is a D-ribose 5-phosphate binding site. The Schiff-base intermediate with D-ribose 5-phosphate role is filled by lysine 80. Glycine 152 contributes to the D-ribose 5-phosphate binding site. D-glyceraldehyde 3-phosphate is bound at residue arginine 164. D-ribose 5-phosphate is bound by residues glycine 213 and glycine 234–serine 235.

It belongs to the PdxS/SNZ family. As to quaternary structure, in the presence of PdxT, forms a dodecamer of heterodimers.

It catalyses the reaction aldehydo-D-ribose 5-phosphate + D-glyceraldehyde 3-phosphate + L-glutamine = pyridoxal 5'-phosphate + L-glutamate + phosphate + 3 H2O + H(+). Its pathway is cofactor biosynthesis; pyridoxal 5'-phosphate biosynthesis. In terms of biological role, catalyzes the formation of pyridoxal 5'-phosphate from ribose 5-phosphate (RBP), glyceraldehyde 3-phosphate (G3P) and ammonia. The ammonia is provided by the PdxT subunit. Can also use ribulose 5-phosphate and dihydroxyacetone phosphate as substrates, resulting from enzyme-catalyzed isomerization of RBP and G3P, respectively. The chain is Pyridoxal 5'-phosphate synthase subunit PdxS from Dehalococcoides mccartyi (strain ATCC BAA-2266 / KCTC 15142 / 195) (Dehalococcoides ethenogenes (strain 195)).